We begin with the raw amino-acid sequence, 77 residues long: U8-lycotoxin-Ls1m (77 aa).

A signal peptide spans 1-20 (MKLMIFTGLVLFAIVRLIEA). Positions 21–26 (QAENEK) are excised as a propeptide.

This sequence belongs to the neurotoxin 19 (CSTX) family. 08 (U8-Lctx) subfamily. Contains 4 disulfide bonds. In terms of tissue distribution, expressed by the venom gland.

The protein localises to the secreted. This is U8-lycotoxin-Ls1m from Lycosa singoriensis (Wolf spider).